We begin with the raw amino-acid sequence, 337 residues long: Holliday junction branch migration complex subunit RuvB (337 aa).

Residues 4 to 185 (ADRLISNSFE…FGITQRLEYY (182 aa)) form a large ATPase domain (RuvB-L) region. ATP-binding positions include Ile-24, Arg-25, Gly-66, Lys-69, Thr-70, Thr-71, 132–134 (EDY), Arg-175, Tyr-185, and Arg-222. Position 70 (Thr-70) interacts with Mg(2+). The interval 186–256 (KVDDLKDIVQ…TAKKALDMLD (71 aa)) is small ATPAse domain (RuvB-S). The interval 259 to 337 (SSGFDYMDRK…HFGLDIPEAR (79 aa)) is head domain (RuvB-H). Residues Arg-314 and Arg-319 each contribute to the DNA site.

The protein belongs to the RuvB family. Homohexamer. Forms an RuvA(8)-RuvB(12)-Holliday junction (HJ) complex. HJ DNA is sandwiched between 2 RuvA tetramers; dsDNA enters through RuvA and exits via RuvB. An RuvB hexamer assembles on each DNA strand where it exits the tetramer. Each RuvB hexamer is contacted by two RuvA subunits (via domain III) on 2 adjacent RuvB subunits; this complex drives branch migration. In the full resolvosome a probable DNA-RuvA(4)-RuvB(12)-RuvC(2) complex forms which resolves the HJ.

It is found in the cytoplasm. It catalyses the reaction ATP + H2O = ADP + phosphate + H(+). Its function is as follows. The RuvA-RuvB-RuvC complex processes Holliday junction (HJ) DNA during genetic recombination and DNA repair, while the RuvA-RuvB complex plays an important role in the rescue of blocked DNA replication forks via replication fork reversal (RFR). RuvA specifically binds to HJ cruciform DNA, conferring on it an open structure. The RuvB hexamer acts as an ATP-dependent pump, pulling dsDNA into and through the RuvAB complex. RuvB forms 2 homohexamers on either side of HJ DNA bound by 1 or 2 RuvA tetramers; 4 subunits per hexamer contact DNA at a time. Coordinated motions by a converter formed by DNA-disengaged RuvB subunits stimulates ATP hydrolysis and nucleotide exchange. Immobilization of the converter enables RuvB to convert the ATP-contained energy into a lever motion, pulling 2 nucleotides of DNA out of the RuvA tetramer per ATP hydrolyzed, thus driving DNA branch migration. The RuvB motors rotate together with the DNA substrate, which together with the progressing nucleotide cycle form the mechanistic basis for DNA recombination by continuous HJ branch migration. Branch migration allows RuvC to scan DNA until it finds its consensus sequence, where it cleaves and resolves cruciform DNA. The sequence is that of Holliday junction branch migration complex subunit RuvB from Photobacterium profundum (strain SS9).